The primary structure comprises 303 residues: MLWFKNLMVYRLSREVSLSADEMEKQLSAFSFTPCGSQDMAKTGWVSPMGSHSDALTHTVNGQIVICARKEEKILPSPVIKQELQAKIERLEGEQHRKLKKTEKDSLKDEVLHSLLPRAFSRFNQTFLWIDTVNDLIMVDAASAKRAEDTLALLRKSLGSLPVVPLTLENPIELTLTEWVRSKELPSGFALMDEAELKAILEDGGVIRCKKQDLFSDEIAVHIEAGKLVTKLALDWQERVQLVLSDDGSLKRLKFSDTLREQNEDIDQEDFAQRFDADFILMTSELAALIKNLIEALGGEAQH.

The protein belongs to the RdgC family.

Its subcellular location is the cytoplasm. The protein resides in the nucleoid. In terms of biological role, may be involved in recombination. In Yersinia enterocolitica serotype O:8 / biotype 1B (strain NCTC 13174 / 8081), this protein is Recombination-associated protein RdgC.